The primary structure comprises 819 residues: Leucine--tRNA ligase (819 aa).

A 'HIGH' region motif is present at residues 51–61 (PYPSGNLHIGH). The 'KMSKS' region motif lies at 586 to 590 (KMSKS). Position 589 (Lys-589) interacts with ATP.

Belongs to the class-I aminoacyl-tRNA synthetase family.

It is found in the cytoplasm. It carries out the reaction tRNA(Leu) + L-leucine + ATP = L-leucyl-tRNA(Leu) + AMP + diphosphate. This chain is Leucine--tRNA ligase, found in Deinococcus geothermalis (strain DSM 11300 / CIP 105573 / AG-3a).